The chain runs to 417 residues: Gamma-glutamyl phosphate reductase (417 aa).

It belongs to the gamma-glutamyl phosphate reductase family.

The protein localises to the cytoplasm. It catalyses the reaction L-glutamate 5-semialdehyde + phosphate + NADP(+) = L-glutamyl 5-phosphate + NADPH + H(+). Its pathway is amino-acid biosynthesis; L-proline biosynthesis; L-glutamate 5-semialdehyde from L-glutamate: step 2/2. Catalyzes the NADPH-dependent reduction of L-glutamate 5-phosphate into L-glutamate 5-semialdehyde and phosphate. The product spontaneously undergoes cyclization to form 1-pyrroline-5-carboxylate. This is Gamma-glutamyl phosphate reductase from Cronobacter sakazakii (strain ATCC BAA-894) (Enterobacter sakazakii).